The chain runs to 279 residues: Tryptophan synthase alpha chain (279 aa).

Residues E50 and D61 each act as proton acceptor in the active site.

The protein belongs to the TrpA family. Tetramer of two alpha and two beta chains.

It carries out the reaction (1S,2R)-1-C-(indol-3-yl)glycerol 3-phosphate + L-serine = D-glyceraldehyde 3-phosphate + L-tryptophan + H2O. It functions in the pathway amino-acid biosynthesis; L-tryptophan biosynthesis; L-tryptophan from chorismate: step 5/5. In terms of biological role, the alpha subunit is responsible for the aldol cleavage of indoleglycerol phosphate to indole and glyceraldehyde 3-phosphate. This is Tryptophan synthase alpha chain from Brucella ovis (strain ATCC 25840 / 63/290 / NCTC 10512).